The primary structure comprises 419 residues: Interferon regulatory factor 3 (419 aa).

Thr3 carries the phosphothreonine modification. The IRF tryptophan pentad repeat DNA-binding region spans 5-111 (KPRILPWLVS…DPHKVYEFVT (107 aa)). Ser14 carries the post-translational modification Phosphoserine. Thr75 bears the Phosphothreonine mark. Ser97, Ser123, and Ser135 each carry phosphoserine. The tract at residues 140-419 (PKLFDGLILG…DMDFQATGNI (280 aa)) is mediates interaction with ZDHHC11. A Glycyl lysine isopeptide (Lys-Gly) (interchain with G-Cter in ISG15) cross-link involves residue Lys188. The interaction with HERC5 stretch occupies residues 194 to 353 (EQWEFEVTAF…MWPQDQPWVK (160 aa)). A phosphothreonine mark is found at Thr230, Thr237, and Thr246. Residues Lys353 and Lys359 each participate in a glycyl lysine isopeptide (Lys-Gly) (interchain with G-Cter in ISG15) cross-link. Lys359 bears the N6-acetyllysine mark. Phosphoserine is present on Ser378. Ser379 is subject to Diphosphoserine. A Phosphoserine; by TBK1 modification is found at Ser379. Ser388 is modified (phosphoserine; by IKKE). A Phosphoserine modification is found at Ser390. A Phosphothreonine modification is found at Thr396.

Belongs to the IRF family. As to quaternary structure, monomer. Homodimer; phosphorylation-induced. Interacts (when phosphorylated) with CREBBP. Interacts with MAVS (via phosphorylated pLxIS motif). Interacts with TICAM1 (via phosphorylated pLxIS motif). Interacts with STING1 (via phosphorylated pLxIS motif). Interacts with IKBKE and TBK1. Interacts with TICAM2. Interacts with RBCK1. Interacts with HERC5. Interacts with DDX3X; the interaction allows the phosphorylation and activation of IRF3 by IKBKE. Interacts with TRIM21 and ULK1, in the presence of TRIM21; this interaction leads to IRF3 degradation by autophagy. Interacts with RIOK3; RIOK3 probably mediates the interaction of TBK1 with IRF3. Interacts with ILRUN; the interaction inhibits IRF3 binding to its DNA consensus sequence. Interacts with LYAR; this interaction impairs IRF3 DNA-binding activity. Interacts with TRAF3. Interacts with ZDHHC11; ZDHHC11 recruits IRF3 to STING1 upon DNA virus infection and thereby promotes IRF3 activation. Interacts with HSP90AA1; the interaction mediates IRF3 association with TOMM70. Interacts with BCL2; the interaction decreases upon Sendai virus infection. Interacts with BAX; the interaction is direct, increases upon virus infection and mediates the formation of the apoptosis complex TOMM70:HSP90AA1:IRF3:BAX. Interacts with DDX56. Interacts with NBR1. Constitutively phosphorylated on many Ser/Thr residues. Activated following phosphorylation by TBK1 and IKBKE. Innate adapter proteins, such as MAVS, STING1 or TICAM1, are first activated by viral RNA, cytosolic DNA, and bacterial lipopolysaccharide (LPS), respectively, leading to activation of the kinases TBK1 and IKBKE. These kinases then phosphorylate the adapter proteins on the pLxIS motif, leading to recruitment of IRF3, thereby licensing IRF3 for phosphorylation by TBK1. Phosphorylation at Ser-379 is followed by pyrophosphorylation at the same residue, promoting phosphorylation at Ser-388. Phosphorylated IRF3 dissociates from the adapter proteins, dimerizes, and then enters the nucleus to induce IFNs. Post-translationally, pyrophosphorylated by UAP1 following phosphorylation at Ser-379 by TBK1. Pyrophosphorylation promotes subsequent phosphorylation at Ser-388, leading to homodimerization of IRF3. In terms of processing, acetylation at Lys-359 by KAT8 inhibits recruimtent to promoters and transcription factor activity. Acetylation by KAT8 is promoted by phosphorylation at Ser-388. Ubiquitinated; ubiquitination involves RBCK1 leading to proteasomal degradation. Polyubiquitinated; ubiquitination involves TRIM21 leading to proteasomal degradation. Ubiquitinated by UBE3C, leading to its degradation. Deubiquitinated by USP5 on both 'Lys-48'-linked unanchored and 'Lys-63'-linked anchored polyubiquitin, leading to inhibition of anti-RNA viral innate immunity. Post-translationally, ISGylated by HERC5 resulting in sustained IRF3 activation and in the inhibition of IRF3 ubiquitination by disrupting PIN1 binding. The phosphorylation state of IRF3 does not alter ISGylation. In terms of processing, proteolytically cleaved by apoptotic caspases during apoptosis, leading to its inactivation. Cleavage by CASP3 during virus-induced apoptosis inactivates it, preventing cytokine overproduction.

It is found in the cytoplasm. Its subcellular location is the nucleus. The protein resides in the mitochondrion. In the absence of viral infection, maintained as a monomer in an autoinhibited state. Phosphorylation by TBK1 and IKBKE disrupts this autoinhibition leading to the liberation of the DNA-binding and dimerization activities and its nuclear localization where it can activate type I IFN and ISG genes. Phosphorylation and activation follow the following steps: innate adapter proteins, such as MAVS, STING1 or TICAM1, are first activated by viral RNA, cytosolic DNA and bacterial lipopolysaccharide (LPS), respectively, leading to activation of the kinases TBK1 and IKBKE. These kinases then phosphorylate the adapter proteins on their pLxIS motif, leading to recruitment of IRF3, thereby licensing IRF3 for phosphorylation by TBK1. Phosphorylated IRF3 dissociates from the adapter proteins, dimerizes, and then enters the nucleus to induce IFNs. In terms of biological role, key transcriptional regulator of type I interferon (IFN)-dependent immune responses which plays a critical role in the innate immune response against DNA and RNA viruses. Regulates the transcription of type I IFN genes (IFN-alpha and IFN-beta) and IFN-stimulated genes (ISG) by binding to an interferon-stimulated response element (ISRE) in their promoters. Acts as a more potent activator of the IFN-beta (IFNB) gene than the IFN-alpha (IFNA) gene and plays a critical role in both the early and late phases of the IFNA/B gene induction. Found in an inactive form in the cytoplasm of uninfected cells and following viral infection, double-stranded RNA (dsRNA), or toll-like receptor (TLR) signaling, is phosphorylated by IKBKE and TBK1 kinases. This induces a conformational change, leading to its dimerization and nuclear localization and association with CREB binding protein (CREBBP) to form dsRNA-activated factor 1 (DRAF1), a complex which activates the transcription of the type I IFN and ISG genes. Can activate distinct gene expression programs in macrophages and can induce significant apoptosis in primary macrophages. This is Interferon regulatory factor 3 (Irf3) from Mus musculus (Mouse).